The chain runs to 307 residues: Acyl transferase (307 aa).

Catalysis depends on charge relay system residues S116, D213, and H243.

This sequence belongs to the LuxD family.

It functions in the pathway lipid metabolism; fatty acid reduction for biolumincescence. Functionally, acyl transferase is part of the fatty acid reductase system required for aldehyde biosynthesis; it produces fatty acids for the luminescent reaction. The protein is Acyl transferase of Photorhabdus luminescens (Xenorhabdus luminescens).